Here is a 330-residue protein sequence, read N- to C-terminus: ADP-L-glycero-D-manno-heptose-6-epimerase (330 aa).

NADP(+) contacts are provided by residues Phe-11 to Ile-12, Asp-32 to Asp-33, Gln-39, Gln-54, Gln-75 to Ala-79, and Asn-92. The active-site Proton acceptor is the Tyr-139. Lys-143 lines the NADP(+) pocket. A substrate-binding site is contributed by Asn-168. NADP(+) contacts are provided by Val-169 and Lys-177. Residue Lys-177 is the Proton acceptor of the active site. Residues Arg-179, His-186, Phe-200–His-203, Arg-213, and Tyr-292 each bind substrate.

The protein belongs to the NAD(P)-dependent epimerase/dehydratase family. HldD subfamily. As to quaternary structure, homopentamer. The cofactor is NADP(+).

The catalysed reaction is ADP-D-glycero-beta-D-manno-heptose = ADP-L-glycero-beta-D-manno-heptose. It functions in the pathway nucleotide-sugar biosynthesis; ADP-L-glycero-beta-D-manno-heptose biosynthesis; ADP-L-glycero-beta-D-manno-heptose from D-glycero-beta-D-manno-heptose 7-phosphate: step 4/4. Its pathway is bacterial outer membrane biogenesis; LPS core biosynthesis. Its function is as follows. Catalyzes the interconversion between ADP-D-glycero-beta-D-manno-heptose and ADP-L-glycero-beta-D-manno-heptose via an epimerization at carbon 6 of the heptose. The sequence is that of ADP-L-glycero-D-manno-heptose-6-epimerase from Pseudomonas aeruginosa (strain ATCC 15692 / DSM 22644 / CIP 104116 / JCM 14847 / LMG 12228 / 1C / PRS 101 / PAO1).